A 344-amino-acid polypeptide reads, in one-letter code: MEEDMYVDIFLDPYTFQDDFPPATSQLFSPGAPLDVHPLNPSNPETVFHSHLGAVKKAPSDFSSVDLSFLPDELTQENKDRTVTGNKVTNEESFRTQDWQSQLQLPDEQGSGLNLNSNSSPDTQSCLCSHDADSNQLSSETPNSNALPVVLISSMTPMNPVTECSGIVPQLQNVVSTANLACKLDLRKIALNAKNTEYNPKRFAAVIMRIREPRTTALIFSSGKVVCTGAKSEDESRLAARKYARVVQKLGFPVRFFNFKIQNMVASCDVKFPIRLEILALTHRQFSSYEPELFPGLIYKMVKPQVVLLIFASGKVVLTGAKERSEIYEAFENMYPILESFKKV.

The interval 78–143 is disordered; sequence NKDRTVTGNK…SNQLSSETPN (66 aa). Residues 110 to 120 are compositionally biased toward low complexity; the sequence is GSGLNLNSNSS. Positions 134 to 143 are enriched in polar residues; it reads SNQLSSETPN.

The protein belongs to the TBP family. As to quaternary structure, interacts with TAF3.

The protein resides in the cytoplasm. It localises to the nucleus. In terms of biological role, transcription factor required in complex with TAF3 for the differentiation of myoblasts into myocytes. The complex replaces TFIID at specific promoters at an early stage in the differentiation process. The polypeptide is TATA box-binding protein-like 2 (Rattus norvegicus (Rat)).